A 459-amino-acid polypeptide reads, in one-letter code: MKKLSRTISGVTPVAVMTKPLPCPGKCIYCPTFAATPQSYTPESPAVLRAKSCEYQAYKQVALRLRIIQDMGHPTDKVELIIMGGTFLSADITYQYGFIKDCYDALNGVVAGSLEEAKTINETAQHRCVGLCIETRPDICGKAEIQRMIDFGTTRVELGVQMLDDDIYKLVERGHRVSDVAEATCLLREYGLKVHYHWMPGLPGSSPEKDLALSRMVFEDPRFCPDGLKLYPTMVVEGTILEQWWKEGRYTPYPNGTMTGLIADIKALVPPYVRISRVLRDIPAVFISAGLKDSLRDGVRQILESRHQKCRCIRCREYGHRQRKGQTSGEPTLRRLDYPASGGKEIFLSFEDASDTLYGLLRLRIPCASLPVLGQKYGAKTGLVRELHVYGTELSLGEQGDQSAQHRGLGRKLLAEAECLARDEFGLDSLAILSGVGAREYYRSLGYELVAGYMCKHLD.

Positions 1–278 (MKKLSRTISG…VPPYVRISRV (278 aa)) are radical S-adenosyl-L-methionine (rSAM). Residues 6-271 (RTISGVTPVA…IADIKALVPP (266 aa)) enclose the Radical SAM core domain. Residues C23, C27, and C30 each contribute to the [4Fe-4S] cluster site. Residue K77 coordinates acetyl-CoA. The N-acetyltransferase stretch occupies residues 308 to 459 (QKCRCIRCRE…VAGYMCKHLD (152 aa)). Zn(2+) contacts are provided by C310, C312, and C315. Acetyl-CoA is bound by residues 386–389 (ELHV), 409–411 (LGR), and Y442.

Belongs to the ELP3 family. In terms of assembly, homodimer. It depends on [4Fe-4S] cluster as a cofactor.

It carries out the reaction uridine(34) in tRNA + acetyl-CoA + S-adenosyl-L-methionine + H2O = 5-(carboxymethyl)uridine(34) in tRNA + 5'-deoxyadenosine + L-methionine + CoA + 2 H(+). It functions in the pathway tRNA modification. In terms of biological role, tRNA uridine(34) acetyltransferase, which mediates formation of carboxymethyluridine in the wobble base at position 34 in tRNAs. The proposed mechanism is the following: (i) recruits S-adenosyl-L-methionine and cleaves it to generate a 5'-deoxyadenosine radical (5'-dA) in the radical S-adenosyl-L-methionine (rSAM) region, (ii) hydrolyzes acetyl-CoA in the N-acetyltransferase domain and (iii) an acetyl radical is formed by the products of the two domains and (iv) is transferred onto the C5 position of uridine(34) in the bound tRNA molecule. Does not show protein lysine acetyltransferase activity. The sequence is that of tRNA uridine(34) acetyltransferase from Dehalococcoides mccartyi (strain CBDB1).